We begin with the raw amino-acid sequence, 368 residues long: Protein mab-21-like 3 (368 aa).

This sequence belongs to the mab-21 family.

The sequence is that of Protein mab-21-like 3 (mab21L3) from Xenopus laevis (African clawed frog).